The primary structure comprises 72 residues: Small ribosomal subunit protein eS31 (72 aa).

Positions 32, 35, 51, and 54 each coordinate Zn(2+). The C4-type zinc finger occupies C32 to C54.

The protein belongs to the eukaryotic ribosomal protein eS31 family. As to quaternary structure, part of the 30S ribosomal subunit. It depends on Zn(2+) as a cofactor.

The chain is Small ribosomal subunit protein eS31 from Caldivirga maquilingensis (strain ATCC 700844 / DSM 13496 / JCM 10307 / IC-167).